The following is a 387-amino-acid chain: Patatin-02 (387 aa).

A signal peptide spans 1–23 (MATTKSFLILIVMILATTSSTFA). The PNPLA domain maps to 32–230 (LSIDGGGIKG…TVADPALLSV (199 aa)). Residues 36 to 41 (GGGIKG) carry the GXGXXG motif. Residues 75–79 (GTSTG) carry the GXSXG motif. Ser77 functions as the Nucleophile in the catalytic mechanism. N-linked (GlcNAc...) asparagine glycosylation is present at Asn115. Asp216 serves as the catalytic Proton acceptor. Residues 216–218 (DGA) carry the DGA/G motif. The stretch at 361–385 (ETYEEALKRFAKLLSDRKKLRANKA) forms a coiled coil.

This sequence belongs to the patatin family. As to expression, tuber and stolon.

It localises to the vacuole. Its function is as follows. Probable lipolytic acyl hydrolase (LAH), an activity which is thought to be involved in the response of tubers to pathogens. This is Patatin-02 from Solanum tuberosum (Potato).